Reading from the N-terminus, the 684-residue chain is Cleavage and polyadenylation specificity factor subunit 3 (684 aa).

N-acetylserine is present on serine 2. Histidine 71, histidine 73, aspartate 75, histidine 76, histidine 158, and aspartate 179 together coordinate Zn(2+). Catalysis depends on histidine 396, which acts as the Proton donor. Position 418 (histidine 418) interacts with Zn(2+). Residues lysine 462, lysine 465, and lysine 545 each participate in a glycyl lysine isopeptide (Lys-Gly) (interchain with G-Cter in SUMO) cross-link. Serine 659 carries the post-translational modification Phosphoserine. A Phosphothreonine modification is found at threonine 681.

Belongs to the metallo-beta-lactamase superfamily. RNA-metabolizing metallo-beta-lactamase-like family. CPSF3 subfamily. Component of the cleavage and polyadenylation specificity factor (CPSF) complex, composed of CPSF1, CPSF2, CPSF3, CPSF4 and FIP1L1. Interacts with CPSF2, CSTF2 and SYMPK. Interacts with TUT1; the interaction is direct and mediates the recruitment of the CPSF complex on the 3'UTR of pre-mRNAs. Interacts with WDR33. Interacts with ZC3H3. It depends on Zn(2+) as a cofactor. Sumoylated on Lys-462, Lys-465 and Lys-545, preferentially by SUMO3.

The protein localises to the nucleus. In terms of biological role, component of the cleavage and polyadenylation specificity factor (CPSF) complex that plays a key role in pre-mRNA 3'-end formation, recognizing the AAUAAA signal sequence and interacting with poly(A) polymerase and other factors to bring about cleavage and poly(A) addition. Has endonuclease activity, and functions as an mRNA 3'-end-processing endonuclease. Also involved in the histone 3'-end pre-mRNA processing. U7 snRNP-dependent protein that induces both the 3'-endoribonucleolytic cleavage of histone pre-mRNAs and acts as a 5' to 3' exonuclease for degrading the subsequent downstream cleavage product (DCP) of mature histone mRNAs. Cleavage occurs after the 5'-ACCCA-3' sequence in the histone pre-mRNA leaving a 3'hydroxyl group on the upstream fragment containing the stem loop (SL) and 5' phosphate on the downstream cleavage product (DCP) starting with CU nucleotides. The U7-dependent 5' to 3' exonuclease activity is processive and degrades the DCP RNA substrate even after complete removal of the U7-binding site. Binds to the downstream cleavage product (DCP) of histone pre-mRNAs and the cleaved DCP RNA substrate in a U7 snRNP dependent manner. Required for entering/progressing through S-phase of the cell cycle. Required for the selective processing of microRNAs (miRNAs) during embryonic stem cell differentiation via its interaction with ISY1. Required for the biogenesis of all miRNAs from the pri-miR-17-92 primary transcript except miR-92a. Only required for the biogenesis of miR-290 and miR-96 from the pri-miR-290-295 and pri-miR-96-183 primary transcripts, respectively. The sequence is that of Cleavage and polyadenylation specificity factor subunit 3 (CPSF3) from Bos taurus (Bovine).